The sequence spans 511 residues: Putative polyol transporter 2 (511 aa).

12 consecutive transmembrane segments (helical) span residues 25–45, 63–83, 94–114, 117–137, 156–176, 186–206, 284–304, 324–344, 351–371, 384–404, 424–444, and 454–474; these read FAFA…YDIG, VQLE…SGAA, YTIV…GFAT, PFIM…MMIA, FPEI…YFFA, FMLG…LAMP, ILIA…DAVV, LATV…TCLV, ALLL…GTSL, WAIG…SLGA, GASL…MTFL, and GAFL…FTFL.

Belongs to the major facilitator superfamily. Sugar transporter (TC 2.A.1.1) family.

The protein resides in the membrane. In terms of biological role, plasma membrane sugar-proton symporter. The protein is Putative polyol transporter 2 (PLT2) of Arabidopsis thaliana (Mouse-ear cress).